A 148-amino-acid polypeptide reads, in one-letter code: Large ribosomal subunit protein uL15 (148 aa).

The segment covering 1–12 has biased composition (basic and acidic residues); it reads MSDPIKLHDLRP. Residues 1 to 45 are disordered; that stretch reads MSDPIKLHDLRPAKGANKAKTRVGRGEASKGKTAGRGTKGTKARN.

This sequence belongs to the universal ribosomal protein uL15 family. Part of the 50S ribosomal subunit.

Functionally, binds to the 23S rRNA. The chain is Large ribosomal subunit protein uL15 from Corynebacterium urealyticum (strain ATCC 43042 / DSM 7109).